Here is a 261-residue protein sequence, read N- to C-terminus: Small ribosomal subunit protein uS2 (261 aa).

The residue at position 2 (Ser2) is an N-acetylserine. Positions 212-261 (QNAAEEAKAEETEEAPAAEAETEWTGETDDVDWADSGATPAAEDAAASNW) are disordered. The span at 222–244 (ETEEAPAAEAETEWTGETDDVDW) shows a compositional bias: acidic residues.

Belongs to the universal ribosomal protein uS2 family. As to quaternary structure, component of the small ribosomal subunit. Mature ribosomes consist of a small (40S) and a large (60S) subunit. The 40S subunit contains about 33 different proteins and 1 molecule of RNA (18S). The 60S subunit contains about 49 different proteins and 3 molecules of RNA (25S, 5.8S and 5S). Interacts with RPS21.

It localises to the cytoplasm. In terms of biological role, required for the assembly and/or stability of the 40S ribosomal subunit. Required for the processing of the 20S rRNA-precursor to mature 18S rRNA in a late step of the maturation of 40S ribosomal subunits. The polypeptide is Small ribosomal subunit protein uS2 (Candida tropicalis (Yeast)).